Consider the following 138-residue polypeptide: Putative pre-16S rRNA nuclease (138 aa).

It belongs to the YqgF nuclease family.

The protein resides in the cytoplasm. Functionally, could be a nuclease involved in processing of the 5'-end of pre-16S rRNA. This is Putative pre-16S rRNA nuclease from Escherichia coli O45:K1 (strain S88 / ExPEC).